The primary structure comprises 329 residues: Transcription factor RF2b (329 aa).

Disordered stretches follow at residues 1-24 (MQEP…RSEV) and 62-97 (SSGP…DGSG). The region spanning 132–195 (DPKRAKRILA…TGLSAENAEL (64 aa)) is the bZIP domain. A basic motif region spans residues 134–155 (KRAKRILANRQSAARSKERKAR). Residues 160 to 174 (LERKVQTLQTEATTL) are leucine-zipper. Residues 260 to 303 (RQNGGTQLPPQFQPPRPNVPNHMLSHPNGLQDIMQQDPLGRLQG) are disordered.

This sequence belongs to the bZIP family. As to quaternary structure, binds DNA as a homodimer or as a heterodimer with RF2a. The heterodimer binds stronger to DNA than the homodimer. Expressed at high levels in roots, low level in leaf sheath, but not in leaf blade. Predominantly expressed in vascular tissues.

It is found in the nucleus. Its function is as follows. Transcription factor probably involved in vascular development and shoot tissue organization. Binds to the DNA sequence 5'-CCGAGTGTGCCCCTGG-3' present in the promoter region Box II of the phloem-specific rice tungro bacilliform virus (RTBV) promoter. May regulate tissue-specific expression of the RTBV promoter and virus replication. The sequence is that of Transcription factor RF2b (RF2b) from Oryza sativa subsp. japonica (Rice).